We begin with the raw amino-acid sequence, 716 residues long: Putative mannosyltransferase YkcB (716 aa).

The next 8 helical transmembrane spans lie at 8 to 28 (LDIV…YNIW), 44 to 64 (MMQS…FITV), 87 to 107 (SVIL…YLLI), 118 to 135 (IASF…VART), 137 to 157 (NVDA…FKAI), 159 to 179 (KGKL…FNTK), 180 to 200 (MLQA…AANA), and 206 to 226 (IVSL…WPLI). The segment at 260-363 (TGQNSGGGQG…GSGMFGTGTP (104 aa)) is disordered. A compositionally biased stretch (polar residues) spans 278–289 (EMSSSDNTQAPP). The span at 290–307 (NQSSSNSSSSDGKSSNGN) shows a compositional bias: low complexity. Residues 318–347 (PSGGQGGPPSGGDGGQGGPGGDGGKGGTGT) show a composition bias toward gly residues. The next 6 helical transmembrane spans lie at 376 to 396 (QISW…IAGA), 409 to 429 (TVFW…AEFF), 433 to 453 (YLIM…VALV), 462 to 482 (WKAW…LFIL), 491 to 511 (VGWS…LLLF), and 518 to 538 (FSYY…MYWA). Positions 664–716 (VASEKWQSSSDQKTENTDSADTSSSKASGENGKMGGPGGMNQSATLYELHADE) are disordered. Low complexity predominate over residues 680-694 (TDSADTSSSKASGEN).

This sequence belongs to the glycosyltransferase 39 family.

The protein localises to the cell membrane. In Bacillus subtilis (strain 168), this protein is Putative mannosyltransferase YkcB (ykcB).